We begin with the raw amino-acid sequence, 96 residues long: C-C motif chemokine 20 (96 aa).

The N-terminal stretch at 1 to 26 is a signal peptide; sequence MACKHLPFLALAGVLLAYLCSQSEAA. 2 disulfide bridges follow: cysteine 31-cysteine 58 and cysteine 32-cysteine 74.

This sequence belongs to the intercrine beta (chemokine CC) family. As to expression, low levels in thymus and lung.

It localises to the secreted. In terms of biological role, acts as a ligand for C-C chemokine receptor CCR6. Signals through binding and activation of CCR6 and induces a strong chemotactic response and mobilization of intracellular calcium ions. The ligand-receptor pair CCL20-CCR6 is responsible for the chemotaxis of dendritic cells (DC), effector/memory T-cells and B-cells and plays an important role at skin and mucosal surfaces under homeostatic and inflammatory conditions, as well as in pathology, including cancer and autoimmune diseases. CCL20 acts as a chemotactic factor that attracts lymphocytes and, slightly, neutrophils, but not monocytes. Involved in the recruitment of both the pro-inflammatory IL17 producing helper T-cells (Th17) and the regulatory T-cells (Treg) to sites of inflammation. Required for optimal migration of thymic natural regulatory T cells (nTregs) and DN1 early thymocyte progenitor cells. Positively regulates sperm motility and chemotaxis via its binding to CCR6 which triggers Ca2+ mobilization in the sperm which is important for its motility. May be involved in formation and function of the mucosal lymphoid tissues by attracting lymphocytes and dendritic cells towards epithelial cells. The sequence is that of C-C motif chemokine 20 (Ccl20) from Rattus norvegicus (Rat).